Reading from the N-terminus, the 561-residue chain is DNA ligase B (561 aa).

Catalysis depends on Lys125, which acts as the N6-AMP-lysine intermediate.

Belongs to the NAD-dependent DNA ligase family. LigB subfamily.

It catalyses the reaction NAD(+) + (deoxyribonucleotide)n-3'-hydroxyl + 5'-phospho-(deoxyribonucleotide)m = (deoxyribonucleotide)n+m + AMP + beta-nicotinamide D-nucleotide.. Its function is as follows. Catalyzes the formation of phosphodiester linkages between 5'-phosphoryl and 3'-hydroxyl groups in double-stranded DNA using NAD as a coenzyme and as the energy source for the reaction. The protein is DNA ligase B of Salmonella heidelberg (strain SL476).